Here is a 328-residue protein sequence, read N- to C-terminus: Formimidoylglutamase (328 aa).

Residues His-133, Asp-159, His-161, Asp-163, Asp-253, and Asp-255 each contribute to the Mn(2+) site.

The protein belongs to the arginase family. The cofactor is Mn(2+).

It carries out the reaction N-formimidoyl-L-glutamate + H2O = formamide + L-glutamate. It functions in the pathway amino-acid degradation; L-histidine degradation into L-glutamate; L-glutamate from N-formimidoyl-L-glutamate (hydrolase route): step 1/1. Catalyzes the conversion of N-formimidoyl-L-glutamate to L-glutamate and formamide. The polypeptide is Formimidoylglutamase (Streptococcus pyogenes serotype M5 (strain Manfredo)).